The chain runs to 754 residues: 5-methyltetrahydropteroyltriglutamate--homocysteine methyltransferase (754 aa).

5-methyltetrahydropteroyltri-L-glutamate contacts are provided by residues 17 to 20 (RELK) and K117. Residues 431–433 (IGS) and E484 each bind L-homocysteine. Residues 431–433 (IGS) and E484 each bind L-methionine. 5-methyltetrahydropteroyltri-L-glutamate is bound by residues 515–516 (RC) and W561. An L-homocysteine-binding site is contributed by D599. An L-methionine-binding site is contributed by D599. E605 is a binding site for 5-methyltetrahydropteroyltri-L-glutamate. The Zn(2+) site is built by H641, C643, and E665. H694 (proton donor) is an active-site residue. C726 provides a ligand contact to Zn(2+).

This sequence belongs to the vitamin-B12 independent methionine synthase family. It depends on Zn(2+) as a cofactor.

It catalyses the reaction 5-methyltetrahydropteroyltri-L-glutamate + L-homocysteine = tetrahydropteroyltri-L-glutamate + L-methionine. It participates in amino-acid biosynthesis; L-methionine biosynthesis via de novo pathway; L-methionine from L-homocysteine (MetE route): step 1/1. Catalyzes the transfer of a methyl group from 5-methyltetrahydrofolate to homocysteine resulting in methionine formation. This Salmonella enteritidis PT4 (strain P125109) protein is 5-methyltetrahydropteroyltriglutamate--homocysteine methyltransferase.